A 593-amino-acid chain; its full sequence is Copine-5 (593 aa).

The 133-residue stretch at 2-134 folds into the C2 1 domain; that stretch reads EQPEDMASLS…SPGSRLEKPL (133 aa). Serine 19 is subject to Phosphoserine. Aspartate 38, aspartate 44, aspartate 98, aspartate 100, serine 103, lysine 108, and aspartate 110 together coordinate Ca(2+). Residue serine 103 is modified to Phosphoserine. Serine 140 carries the phosphoserine modification. The C2 2 domain occupies 161–284; the sequence is KCGTIILSAE…ARGQSQFNIY (124 aa). Positions 192, 198, 254, 256, and 262 each coordinate Ca(2+). The region spanning 328–554 is the VWFA domain; that stretch reads NFTVAIDFTA…DVLAEIPDQL (227 aa). A disordered region spans residues 562–593; sequence GIRPRPPPAAPTHSPSQSPARTPPASPLHTHI. The segment covering 572–581 has biased composition (low complexity); sequence PTHSPSQSPA.

Belongs to the copine family. The cofactor is Ca(2+). Expressed in the brain, heart, stomach, spleen, lymph node and testis. Expressed in melanocytes.

Its subcellular location is the perikaryon. The protein localises to the cell projection. Its function is as follows. Probable calcium-dependent phospholipid-binding protein that may play a role in calcium-mediated intracellular processes. Plays a role in dendrite formation by melanocytes. The protein is Copine-5 of Homo sapiens (Human).